A 203-amino-acid polypeptide reads, in one-letter code: ADP-ribosylation factor-like protein 6-interacting protein 1 (203 aa).

At Met1–Arg41 the chain is on the cytoplasmic side. A helical transmembrane segment spans residues Ala42–Leu62. Topologically, residues Asp63–Ser65 are lumenal. Residues Val66–Ile86 form a helical membrane-spanning segment. Residues Leu87–Lys133 are Cytoplasmic-facing. Residues Pro134–Asn175 traverse the membrane as a helical segment. The Lumenal portion of the chain corresponds to Gln176–Glu203.

It belongs to the ARL6ip family. Homooligomer. Heterodimer with ARL6IP5. Interacts with ATL1, TMEM33 and ARL6.

The protein localises to the endomembrane system. Its subcellular location is the endoplasmic reticulum membrane. It is found in the endoplasmic reticulum. In terms of biological role, positively regulates SLC1A1/EAAC1-mediated glutamate transport by increasing its affinity for glutamate in a PKC activity-dependent manner. Promotes the catalytic efficiency of SLC1A1/EAAC1 probably by reducing its interaction with ARL6IP5, a negative regulator of SLC1A1/EAAC1-mediated glutamate transport. Plays a role in the formation and stabilization of endoplasmic reticulum tubules. Negatively regulates apoptosis, possibly by modulating the activity of caspase-9 (CASP9). Inhibits cleavage of CASP9-dependent substrates and downstream markers of apoptosis but not CASP9 itself. May be involved in protein transport, membrane trafficking, or cell signaling during hematopoietic maturation. The chain is ADP-ribosylation factor-like protein 6-interacting protein 1 (ARL6IP1) from Pongo abelii (Sumatran orangutan).